The primary structure comprises 379 residues: MLKLIVETKTLVQSLGFASSVVEKRNVIPEYANIKLSAKDGNLELSSTNMDLYLSQKIAVQVVSEGELTVSTKTLNDIVRKLPDSELTLTDLGTTGLEIKGKNCKFNLFTLPVSSFPPMDSINPEASFKISCTDFAKIIESTKFSISLDETRYNLNGVYLHIKDKEFCSASTDGHRLSISWVTLEKQIKNFGVILPQKSAEEILKIVKDPKNINEDIEILLSSNKIKFICNENTIMLSKLIDGTFPDYSAFIPESSSSKLVINRKIFADSIERIAIITVEKFRAVKLSLSRETLEISAVGEARGNAKEVINSSQDKESFYEYNSDESLAIGFNPQYLEDVLKAVKSDLVELYFSDVSAPVLIKFPENPKDIFVVMPVKV.

It belongs to the beta sliding clamp family. As to quaternary structure, forms a ring-shaped head-to-tail homodimer around DNA which binds and tethers DNA polymerases and other proteins to the DNA. The DNA replisome complex has a single clamp-loading complex (3 tau and 1 each of delta, delta', psi and chi subunits) which binds 3 Pol III cores (1 core on the leading strand and 2 on the lagging strand) each with a beta sliding clamp dimer. Additional proteins in the replisome are other copies of gamma, psi and chi, Ssb, DNA helicase and RNA primase.

The protein localises to the cytoplasm. Confers DNA tethering and processivity to DNA polymerases and other proteins. Acts as a clamp, forming a ring around DNA (a reaction catalyzed by the clamp-loading complex) which diffuses in an ATP-independent manner freely and bidirectionally along dsDNA. Initially characterized for its ability to contact the catalytic subunit of DNA polymerase III (Pol III), a complex, multichain enzyme responsible for most of the replicative synthesis in bacteria; Pol III exhibits 3'-5' exonuclease proofreading activity. The beta chain is required for initiation of replication as well as for processivity of DNA replication. In Rickettsia felis (strain ATCC VR-1525 / URRWXCal2) (Rickettsia azadi), this protein is Beta sliding clamp (dnaN).